We begin with the raw amino-acid sequence, 218 residues long: uncharacterized protein (218 aa).

This is an uncharacterized protein from Rickettsia prowazekii (strain Madrid E).